A 101-amino-acid polypeptide reads, in one-letter code: Apolipoprotein C-II (101 aa).

Residues methionine 1–glycine 22 form the signal peptide. The tract at residues threonine 66 to methionine 74 is lipid binding. The tract at residues serine 78 to glutamate 101 is lipoprotein lipase cofactor.

The protein belongs to the apolipoprotein C2 family. Proapolipoprotein C-II is synthesized as a sialic acid containing glycoprotein which is subsequently desialylated prior to its proteolytic processing. In terms of processing, proapolipoprotein C-II, the major form found in plasma undergoes proteolytic cleavage of its N-terminal hexapeptide to generate apolipoprotein C-II, which occurs as the minor form in plasma.

The protein localises to the secreted. In terms of biological role, component of chylomicrons, very low-density lipoproteins (VLDL), low-density lipoproteins (LDL), and high-density lipoproteins (HDL) in plasma. Plays an important role in lipoprotein metabolism as an activator of lipoprotein lipase. Both proapolipoprotein C-II and apolipoprotein C-II can activate lipoprotein lipase. In Plecturocebus moloch (Dusky titi monkey), this protein is Apolipoprotein C-II (APOC2).